Reading from the N-terminus, the 141-residue chain is Transmembrane protein 216 (141 aa).

4 helical membrane-spanning segments follow: residues 15–35, 49–69, 82–102, and 115–135; these read ILFF…LFIF, LVLD…RLFF, LGIS…YLLL, and SILL…LTAF.

In terms of assembly, part of the tectonic-like complex (also named B9 complex). Interacts with TMEM107.

It is found in the membrane. The protein resides in the cytoplasm. It localises to the cytoskeleton. The protein localises to the cilium basal body. In terms of biological role, part of the tectonic-like complex which is required for tissue-specific ciliogenesis and may regulate ciliary membrane composition. This Bos taurus (Bovine) protein is Transmembrane protein 216 (TMEM216).